Consider the following 371-residue polypeptide: Glutamate 5-kinase (371 aa).

K14 provides a ligand contact to ATP. Residues S54, D141, and N153 each contribute to the substrate site. 173-174 (TD) contributes to the ATP binding site. The region spanning 280-357 (AGSLIVDAGA…SDIEQLLGYI (78 aa)) is the PUA domain.

This sequence belongs to the glutamate 5-kinase family.

The protein localises to the cytoplasm. It carries out the reaction L-glutamate + ATP = L-glutamyl 5-phosphate + ADP. It participates in amino-acid biosynthesis; L-proline biosynthesis; L-glutamate 5-semialdehyde from L-glutamate: step 1/2. Catalyzes the transfer of a phosphate group to glutamate to form L-glutamate 5-phosphate. This chain is Glutamate 5-kinase, found in Azoarcus sp. (strain BH72).